The chain runs to 159 residues: Pathogenesis-related leaf protein 6 (159 aa).

Residues 1–24 (MGLFNISLLLTCLMVLAIFHSCEA) form the signal peptide. Glutamine 25 carries the post-translational modification Pyrrolidone carboxylic acid. Residues 32–147 (LAVHNDARAQ…NGWWFISCNY (116 aa)) enclose the SCP domain. 3 disulfides stabilise this stretch: cysteine 68–cysteine 136, cysteine 109–cysteine 115, and cysteine 131–cysteine 145.

The protein belongs to the CRISP family.

Functionally, probably involved in the defense reaction of plants against pathogens. Has antifungal activity. The protein is Pathogenesis-related leaf protein 6 (PR1B1) of Solanum lycopersicum (Tomato).